The chain runs to 390 residues: Small ribosomal subunit protein uS9m (390 aa).

The tract at residues 368 to 390 (PRIRERKKPGQEGARRKFTWKKR) is disordered.

Belongs to the universal ribosomal protein uS9 family. Component of the mitochondrial ribosome small subunit (28S) which comprises a 12S rRNA and about 30 distinct proteins.

The protein localises to the mitochondrion. The protein is Small ribosomal subunit protein uS9m (Mrps9) of Mus musculus (Mouse).